A 309-amino-acid chain; its full sequence is Uricase-2 isozyme 1 (309 aa).

Residues lysine 18 and threonine 64 each act as charge relay system in the active site. Residues threonine 64, aspartate 65, phenylalanine 166, arginine 183, valine 238, glutamine 239, and asparagine 265 each coordinate urate. Histidine 267 acts as the Charge relay system in catalysis. The short motif at 307 to 309 (SKL) is the Microbody targeting signal element.

The protein belongs to the uricase family. Homotetramer. The N-terminus is blocked. Expressed predominantly in the uninfected cells of the central tissue of the root nodule.

It is found in the peroxisome. It catalyses the reaction urate + O2 + H2O = 5-hydroxyisourate + H2O2. It functions in the pathway purine metabolism; urate degradation; (S)-allantoin from urate: step 1/3. Catalyzes the oxidation of uric acid to 5-hydroxyisourate, which is further processed to form (S)-allantoin. The polypeptide is Uricase-2 isozyme 1 (Glycine max (Soybean)).